We begin with the raw amino-acid sequence, 211 residues long: External core antigen (211 aa).

An N-terminal signal peptide occupies residues 1 to 19; that stretch reads MHLFHLCLIILCSCPTVQA. An HBEAG region spans residues 25–27; that stretch reads GWL. The disordered stretch occupies residues 165–211; sequence NAPILSTLPETTVVRRRRPSGRRTPSPRRRRSQSPRRRRSQSPASSC. The segment covering 178–204 has biased composition (basic residues); that stretch reads VRRRRPSGRRTPSPRRRRSQSPRRRRS. A 1; half-length repeat occupies 183-189; the sequence is PSGRRTP. The segment at 183–205 is 3 X 8 AA repeats of S-P-R-R-R-R-S-Q; it reads PSGRRTPSPRRRRSQSPRRRRSQ. A propeptide spanning residues 183 to 211 is cleaved from the precursor; sequence PSGRRTPSPRRRRSQSPRRRRSQSPASSC. 2 consecutive repeat copies span residues 190–197 and 198–205.

It belongs to the orthohepadnavirus precore antigen family. Homodimerizes. Phosphorylated. In terms of processing, cleaved by host furin.

The protein localises to the secreted. The protein resides in the host nucleus. Functionally, may regulate immune response to the intracellular capsid in acting as a T-cell tolerogen, by having an immunoregulatory effect which prevents destruction of infected cells by cytotoxic T-cells. This immune regulation may predispose to chronicity during perinatal infections and prevent severe liver injury during adult infections. In Woolly monkey hepatitis B virus (isolate Louisville) (WMHBV), this protein is External core antigen.